We begin with the raw amino-acid sequence, 389 residues long: Putative serine/threonine-protein kinase (389 aa).

The 342-residue stretch at 15-356 (YRIEKLINRG…LMVSNYLPWY (342 aa)) folds into the Protein kinase domain. The Proton acceptor role is filled by D164.

This sequence belongs to the protein kinase superfamily. Ser/Thr protein kinase family.

The enzyme catalyses L-seryl-[protein] + ATP = O-phospho-L-seryl-[protein] + ADP + H(+). It catalyses the reaction L-threonyl-[protein] + ATP = O-phospho-L-threonyl-[protein] + ADP + H(+). The polypeptide is Putative serine/threonine-protein kinase (Mycoplasma pneumoniae (strain ATCC 29342 / M129 / Subtype 1) (Mycoplasmoides pneumoniae)).